The chain runs to 475 residues: ATP synthase subunit beta (475 aa).

Residue 156–163 participates in ATP binding; sequence GGAGVGKT.

This sequence belongs to the ATPase alpha/beta chains family. F-type ATPases have 2 components, CF(1) - the catalytic core - and CF(0) - the membrane proton channel. CF(1) has five subunits: alpha(3), beta(3), gamma(1), delta(1), epsilon(1). CF(0) has three main subunits: a(1), b(2) and c(9-12). The alpha and beta chains form an alternating ring which encloses part of the gamma chain. CF(1) is attached to CF(0) by a central stalk formed by the gamma and epsilon chains, while a peripheral stalk is formed by the delta and b chains.

It localises to the cell membrane. The catalysed reaction is ATP + H2O + 4 H(+)(in) = ADP + phosphate + 5 H(+)(out). Functionally, produces ATP from ADP in the presence of a proton gradient across the membrane. The catalytic sites are hosted primarily by the beta subunits. The sequence is that of ATP synthase subunit beta from Mycoplasma pneumoniae (strain ATCC 29342 / M129 / Subtype 1) (Mycoplasmoides pneumoniae).